The following is a 239-amino-acid chain: EF-hand domain-containing protein D2 (239 aa).

Positions 1 to 51 (MATDELASKLSRRLQMEDEGGEATEQPGLNGAAAAAAEAPDETAQALGSAD) are disordered. At alanine 2 the chain carries N-acetylalanine. Serine 11 is modified (phosphoserine). A compositionally biased stretch (low complexity) spans 32 to 46 (AAAAAAEAPDETAQA). 2 positions are modified to phosphoserine: serine 73 and serine 75. A Phosphotyrosine modification is found at tyrosine 82. EF-hand domains follow at residues 91-126 (KQIK…LGAP) and 127-162 (QTHL…AAAG). Aspartate 104, aspartate 108, glutamate 115, aspartate 140, aspartate 142, aspartate 144, lysine 146, and glutamate 151 together coordinate Ca(2+). An N6-acetyllysine modification is found at lysine 232.

As to quaternary structure, interacts with CASP9; with inactive form.

It is found in the membrane raft. In terms of biological role, may regulate B-cell receptor (BCR)-induced immature and primary B-cell apoptosis. Plays a role as negative regulator of the canonical NF-kappa-B-activating branch. Controls spontaneous apoptosis through the regulation of BCL2L1 abundance. This Rattus norvegicus (Rat) protein is EF-hand domain-containing protein D2 (Efhd2).